The sequence spans 871 residues: Transient receptor potential cation channel subfamily V member 4 (871 aa).

A disordered region spans residues 1–68 (MADSSEGPRA…GPGDGRPNLR (68 aa)). At 1–469 (MADSSEGPRA…RDKWRKFGAV (469 aa)) the chain is on the cytoplasmic side. Tyr-110 is subject to Phosphotyrosine. Residues Lys-192, Lys-197, Asn-201, 236 to 239 (YRGQ), and Arg-248 each bind ATP. ANK repeat units lie at residues 237 to 266 (RGQT…DVHA) and 284 to 313 (FGEL…KKAD). 249 to 251 (RCK) contributes to the a 1,2-diacyl-sn-glycero-3-phospho-(1D-myo-inositol-4,5-bisphosphate) binding site. Tyr-253 carries the post-translational modification Phosphotyrosine. A 1,2-diacyl-sn-glycero-3-phospho-(1D-myo-inositol-4,5-bisphosphate) contacts are provided by residues 296-299 (NQPH) and Lys-344. The stretch at 369–398 (DGLSPLMMAAKTGKIGIFQHIIRREVTDED) is one ANK 3 repeat. A helical transmembrane segment spans residues 470–490 (SFYINVVSYLCAMVIFTLTAY). At 491 to 507 (YQPLEGTPPYPYRTTVD) the chain is on the extracellular side. The helical transmembrane segment at 508–534 (YLRLAGEVITLFTGVLFFFTNIKDLFM) threads the bilayer. Residues 535–547 (KKCPGVNSLFIDG) are Cytoplasmic-facing. A helical transmembrane segment spans residues 548-568 (SFQLLYFIYSVLVIVSAALYL). Residues 569-572 (AGIE) are Extracellular-facing. The helical transmembrane segment at 573–593 (AYLAVMVFALVLGWMNALYFT) threads the bilayer. The Cytoplasmic portion of the chain corresponds to 594–608 (RGLKLTGTYSIMIQK). Residues 609-636 (ILFKDLFRFLLVYLLFMIGYASALVSLL) traverse the membrane as a helical segment. The Extracellular segment spans residues 637 to 665 (NPCANMKVCNEDQTNCTVPTYPSCRDSET). Positions 666 to 685 (FSTFLLDLFKLTIGMGDLEM) form an intramembrane region, pore-forming. The Selectivity filter signature appears at 679 to 682 (GMGD). Asp-682 contacts Ca(2+). The Extracellular segment spans residues 686–693 (LSSTKYPV). The chain crosses the membrane as a helical span at residues 694–722 (VFIILLVTYIILTFVLLLNMLIALMGETV). Topologically, residues 723-871 (GQVSKESKHI…RKWRTDDAPL (149 aa)) are cytoplasmic. Position 805 is a phosphotyrosine (Tyr-805). The interval 812–831 (HTVGRLRRDRWSSVVPRVVE) is interaction with calmodulin and ITPR3. Ser-824 bears the Phosphoserine mark. Residues 849–871 (GNPRCDGHQQGYPRKWRTDDAPL) form a disordered region.

The protein belongs to the transient receptor (TC 1.A.4) family. TrpV subfamily. TRPV4 sub-subfamily. In terms of assembly, homotetramer. Self-associates in an isoform-specific manner. Isoform 1 and isoform 5 can oligomerize, but isoform 2, isoform 4 and isoform 6 cannot oligomerize. Interacts with calmodulin. Interacts with Map7 and Src family Tyr protein kinases LYN, SRC, FYN, HCK, LCK and YES. Interacts with CTNNB1. The TRPV4 and CTNNB1 complex can interact with CDH1. Interacts with PACSIN1, PACSIN2 and PACSIN3 (via SH3 domain). Part of a complex containing MLC1, AQP4, HEPACAM and ATP1B1. Interacts with ITPR3. Interacts with AQP5; the interaction is probably indirect and regulates TRPV4 activation by hypotonicity. Interacts with ANO1. Interacts (via C-terminus) with PKD2 (via C-terminus). Interacts with DDX3X; this interaction is decreased when the channel is activated. N-glycosylated. As to expression, found in the synoviocytes from patients with (RA) and without (CTR) rheumatoid arthritis (at protein level).

It localises to the cell membrane. The protein resides in the apical cell membrane. It is found in the cell junction. The protein localises to the adherens junction. Its subcellular location is the cell projection. It localises to the cilium. The protein resides in the endoplasmic reticulum. The catalysed reaction is Ca(2+)(in) = Ca(2+)(out). Channel activation is inhibited by binding to phosphatidylinositol-4,5-bisphosphate, and to a much lesser degree by phosphatidylinositol-3,4,5-trisphosphate. Not inhibited by phosphatidylinositol-3,4-bisphosphate and phosphatidylinositol-3,5-bisphosphate. Its function is as follows. Non-selective calcium permeant cation channel involved in osmotic sensitivity and mechanosensitivity. Activation by exposure to hypotonicity within the physiological range exhibits an outward rectification. Also activated by heat, low pH, citrate and phorbol esters. Increase of intracellular Ca(2+) potentiates currents. Channel activity seems to be regulated by a calmodulin-dependent mechanism with a negative feedback mechanism. Promotes cell-cell junction formation in skin keratinocytes and plays an important role in the formation and/or maintenance of functional intercellular barriers. Acts as a regulator of intracellular Ca(2+) in synoviocytes. Plays an obligatory role as a molecular component in the nonselective cation channel activation induced by 4-alpha-phorbol 12,13-didecanoate and hypotonic stimulation in synoviocytes and also regulates production of IL-8. Together with PKD2, forms mechano- and thermosensitive channels in cilium. Negatively regulates expression of PPARGC1A, UCP1, oxidative metabolism and respiration in adipocytes. Regulates expression of chemokines and cytokines related to pro-inflammatory pathway in adipocytes. Together with AQP5, controls regulatory volume decrease in salivary epithelial cells. Required for normal development and maintenance of bone and cartilage. In its inactive state, may sequester DDX3X at the plasma membrane. When activated, the interaction between both proteins is affected and DDX3X relocalizes to the nucleus. In neurons of the central nervous system, could play a role in triggering voluntary water intake in response to increased sodium concentration in body fluid. Non-selective calcium permeant cation channel involved in osmotic sensitivity and mechanosensitivity. Activation by exposure to hypotonicity within the physiological range exhibits an outward rectification. Also activated by phorbol esters. Has the same channel activity as isoform 1, and is activated by the same stimuli. Functionally, lacks channel activity, due to impaired oligomerization and intracellular retention. In terms of biological role, (Microbial infection) Facilitates hepatitis C virus (HCV) replication, possibly through its action on DDX3X. Its function is as follows. (Microbial infection) Facilitates Dengue virus (DENV) replication, possibly through its action on DDX3X. (Microbial infection) Facilitates Zika virus (ZIKV) replication, possibly through its action on DDX3X. This Homo sapiens (Human) protein is Transient receptor potential cation channel subfamily V member 4 (TRPV4).